We begin with the raw amino-acid sequence, 422 residues long: Phosphoribosylamine--glycine ligase (422 aa).

Residues K107 to D313 enclose the ATP-grasp domain. ATP is bound at residue V133–S194. Mg(2+) is bound by residues E283 and N285.

The protein belongs to the GARS family. The cofactor is Mg(2+). Mn(2+) is required as a cofactor.

It carries out the reaction 5-phospho-beta-D-ribosylamine + glycine + ATP = N(1)-(5-phospho-beta-D-ribosyl)glycinamide + ADP + phosphate + H(+). It participates in purine metabolism; IMP biosynthesis via de novo pathway; N(1)-(5-phospho-D-ribosyl)glycinamide from 5-phospho-alpha-D-ribose 1-diphosphate: step 2/2. This is Phosphoribosylamine--glycine ligase from Bacillus subtilis (strain 168).